The sequence spans 1080 residues: MTTKPQNSKQGLAEGEMDVSSLFKRTEVIGRGKFGVVYKGYNVKTGRVYAIKVLNLDSDSDEVEDVQREIQFLASLKQISNITRYYGSYLKDTSLWIIMEHCAGGSLRSLLRPGKIDEKYIGVIMRELLVALKCIHKDNVIHRDIKAANVLITNEGNVKLCDFGVAAQVNQTSLRRQTMAGTPYWMAPEVIMEGVYYDTKVDIWSLGITTYEIATGNPPYCDVEALRAMQLIIKSKPPRLEDRSYSTSLKEFIALCLDEDPKERLSADDLLKSKFIRAHKATPTSILKELISRYLLFRDKNKNKYKIEGSIPENEPSKPSEAPKPSQNGGGDEAQKSIASNDNEIKRVNEGDVEMKWDFDSLSSSDYIIENNINLDALAEDNNEWATAQHDLFNYAYPDEDSYYFDPTSHNTRPFVYQGTTIGKGYPGTIAQNSTLNAPVTNNYTNSKYPSKMVAGTTNTSGTHTAGPMTSSKRLESKAPKQLLELFEDNEIITAENDVNTEAPKISKSISSLNAGNSSRDDFIPSISNEVNGNINNNKMRPHLPPLSSGNNYYSQSTPALPLLQTKFNKTSKGPPTSGLTTAPTSIEIEIPEELPNSALPTPASADPVLIPSTKARSSTVTAGTPSSSSSIQYKSPSNVPRRLTVSNNRPEHCPSTITNQKLGSAVASNSGISSTPNNSNNYNNNTDSENSRGSSGSNTANSTQMGITNPGNVTKLSTHKASSPSRPLFGVGTSPNRKPAGSPTQNIGHNSTHTNLAPPPTMKPMANSKDNKDILLQPLNSIPSSSTLNTISGNSSNNLTSSNYFSNEKEGSRVNGDFKRNNPNLKLQMPLPTPVVRNKLLDPNTATSQNNNGMPGSAGISTNENINQFGFNTSSASNIPVSMTPISEKHIDFGGKIKRSQSISNRKNSSASEHPLNILGSSVSGNVSGIGNNNVGSNNNSGPNNSVPLSANTGNTTIKANSTTIATSSSAAASTTAPISQQTIPSGTQFNHILSSAATAANSVNSLGFGMCPPPQSLQMEMFLDLESFLPGKQRRVDRKPQVLKELENLLQMFEEGLPCIEHALKEQLISTPIKDNEH.

The Protein kinase domain maps to 23–276 (FKRTEVIGRG…ADDLLKSKFI (254 aa)). Residues 29 to 37 (IGRGKFGVV) and Lys52 contribute to the ATP site. Residue Asp144 is the Proton acceptor of the active site. 4 disordered regions span residues 308–347 (EGSI…EIKR), 615–760 (KARS…LAPP), 787–831 (STLN…LQMP), and 901–956 (SQSI…NTGN). The span at 312–326 (PENEPSKPSEAPKPS) shows a compositional bias: low complexity. Polar residues predominate over residues 615-626 (KARSSTVTAGTP). The span at 627–638 (SSSSSIQYKSPS) shows a compositional bias: low complexity. The segment covering 656 to 673 (STITNQKLGSAVASNSGI) has biased composition (polar residues). The span at 674-689 (SSTPNNSNNYNNNTDS) shows a compositional bias: low complexity. Positions 693-726 (RGSSGSNTANSTQMGITNPGNVTKLSTHKASSPS) are enriched in polar residues. Ser735 carries the post-translational modification Phosphoserine. A compositionally biased stretch (polar residues) spans 743-756 (SPTQNIGHNSTHTN). Positions 787-807 (STLNTISGNSSNNLTSSNYFS) are enriched in low complexity. The segment covering 808 to 821 (NEKEGSRVNGDFKR) has biased composition (basic and acidic residues). Positions 901-913 (SQSISNRKNSSAS) are enriched in polar residues. The span at 918-956 (NILGSSVSGNVSGIGNNNVGSNNNSGPNNSVPLSANTGN) shows a compositional bias: low complexity.

Belongs to the protein kinase superfamily. Ser/Thr protein kinase family. As to quaternary structure, interacts with CDC31.

The catalysed reaction is L-seryl-[protein] + ATP = O-phospho-L-seryl-[protein] + ADP + H(+). It carries out the reaction L-threonyl-[protein] + ATP = O-phospho-L-threonyl-[protein] + ADP + H(+). Protein kinase involved in morphogenesis and cell integrity. The protein is Serine/threonine-protein kinase KIC1 (KIC1) of Saccharomyces cerevisiae (strain ATCC 204508 / S288c) (Baker's yeast).